The sequence spans 79 residues: Succinate dehydrogenase assembly factor 1, mitochondrial (79 aa).

The protein belongs to the complex I LYR family. SDHAF1 subfamily. Interacts with sdh2 within an sdh1-sdh2 subcomplex.

Its subcellular location is the mitochondrion matrix. Its function is as follows. Plays an essential role in the assembly of succinate dehydrogenase (SDH), an enzyme complex (also referred to as respiratory complex II) that is a component of both the tricarboxylic acid (TCA) cycle and the mitochondrial electron transport chain, and which couples the oxidation of succinate to fumarate with the reduction of ubiquinone (coenzyme Q) to ubiquinol. Promotes maturation of the iron-sulfur protein subunit sdh2 of the SDH catalytic dimer, protecting it from the deleterious effects of oxidants. May act together with SDHAF3. The sequence is that of Succinate dehydrogenase assembly factor 1, mitochondrial from Schizosaccharomyces pombe (strain 972 / ATCC 24843) (Fission yeast).